The chain runs to 116 residues: Cation channel sperm-associated auxiliary subunit TMEM262 (116 aa).

Topologically, residues 1–16 (MWLQDRIATFFFPKGM) are cytoplasmic. The helical transmembrane segment at 17-38 (MLTTAALMLFFLHLGIFIRDVH) threads the bilayer. The Extracellular portion of the chain corresponds to 39-51 (NFCITYHYDHMSF). Residues 52–72 (HYTVVLMFSQVISICWAAMGS) form a helical membrane-spanning segment. Over 73-84 (LYAEMTENKYVC) the chain is Cytoplasmic. The chain crosses the membrane as a helical span at residues 85–107 (FSALTILMLNGAMFFNRLSLEFL). The Extracellular segment spans residues 108 to 116 (AIEYREEHH).

As to quaternary structure, component of the CatSper complex or CatSpermasome composed of the core pore-forming members CATSPER1, CATSPER2, CATSPER3 and CATSPER4 as well as auxiliary members CATSPERB, CATSPERG, CATSPERD, CATSPERE, CATSPERZ, C2CD6/CATSPERT, TMEM249, TMEM262 and EFCAB9. HSPA1 may be an additional auxiliary complex member. The core complex members CATSPER1, CATSPER2, CATSPER3 and CATSPER4 form a heterotetrameric channel. The auxiliary CATSPERB, CATSPERG, CATSPERD and CATSPERE subunits form a pavilion-like structure over the pore which stabilizes the complex through interactions with CATSPER4, CATSPER3, CATSPER1 and CATSPER2 respectively. TMEM262/CATSPERH interacts with CATSPERB, further stabilizing the complex. C2CD6/CATSPERT interacts at least with CATSPERD and is required for targeting the CatSper complex in the flagellar membrane.

It is found in the cell projection. Its subcellular location is the cilium. The protein resides in the flagellum membrane. Its function is as follows. Auxiliary component of the CatSper complex, a complex involved in sperm cell hyperactivation. The sequence is that of Cation channel sperm-associated auxiliary subunit TMEM262 from Homo sapiens (Human).